Consider the following 144-residue polypeptide: UPF0306 protein ESA_03544 (144 aa).

This sequence belongs to the UPF0306 family.

In Cronobacter sakazakii (strain ATCC BAA-894) (Enterobacter sakazakii), this protein is UPF0306 protein ESA_03544.